The primary structure comprises 749 residues: Ribosome-releasing factor 2, mitochondrial (749 aa).

The N-terminal 22 residues, 1-22, are a transit peptide targeting the mitochondrion; the sequence is MLLLLCNRSVVPRGIRRILRTA. In terms of domain architecture, tr-type G spans 44–322; the sequence is KNIRNIGILA…AVLKYLPAPN (279 aa). GTP-binding positions include 53–60, 117–121, and 171–174; these read AHIDGGKT, DTPGH, and NKMD.

It belongs to the TRAFAC class translation factor GTPase superfamily. Classic translation factor GTPase family. EF-G/EF-2 subfamily.

It localises to the mitochondrion. In terms of biological role, mitochondrial GTPase that mediates the disassembly of ribosomes from messenger RNA at the termination of mitochondrial protein biosynthesis. Not involved in the GTP-dependent ribosomal translocation step during translation elongation. This chain is Ribosome-releasing factor 2, mitochondrial, found in Culex quinquefasciatus (Southern house mosquito).